Reading from the N-terminus, the 948-residue chain is Receptor-like protein 45 (948 aa).

Positions 1 to 26 are cleaved as a signal peptide; the sequence is MSSSKLMDFGLTWIIMMMILLQGCRS. Residues 27–897 are Extracellular-facing; sequence CIESERQGLL…EDDDESGLLD (871 aa). N-linked (GlcNAc...) asparagine glycosylation is found at asparagine 99 and asparagine 113. 2 LRR repeats span residues 106 to 129 and 135 to 162; these read FEELQSLNLSSGYFKGWFDERKGG and LRNLETLDLGVNFYDTSVLPYLNEAVSL. The stretch at 163 to 183 is one LRR 3; degenerate repeat; that stretch reads KTLILHDNLFKGGFPVQELIN. Asparagine 183 is a glycosylation site (N-linked (GlcNAc...) asparagine). LRR repeat units follow at residues 184–208, 210–233, 234–257, 258–284, 286–306, 307–332, 334–357, 358–381, 382–404, 405–429, 430–453, 454–477, 479–502, 503–526, 527–549, 550–573, 575–595, 596–618, 619–640, 642–665, 666–689, 758–782, 783–805, 807–831, and 833–855; these read LTSLEVLDLKFNKFSGQLPTQELTN, RNLRALDLSNNKFSGSLQKQGICR, LEQLQELRLSRNRFEGEIPLCFSR, FSKLRVLDLSSNHLSGKIPYFISDFKS, EYLSLLDNDFEGLFSLGLITE, LTELKVFKLSSRSGMLQIVETNVSGG, QSQLSSIMLSHCNLGKIPGFLWYQ, QELRVIDLSNNILSGVFPTWLLEN, NTELQALLLQNNSFKTLTLPRTM, RRLQILDLSVNNFNNQLPKDVGLIL, ASLRHLNLSNNEFLGNMPSSMARM, ENIEFMDLSYNNFSGKLPRNLFTG, YSLSWLKLSHNRFSGPIIRKSSDE, TSLITLIMDNNMFTGKIPRTLLNL, RMLSVIDLSNNLLTGTIPRWLGN, FFLEVLRISNNRLQGAIPPSLFNI, YLWLLDLSGNFLSGSLPLRSS, SDYGYILDLHNNNLTGSIPDTLW, YGLRLLDLRNNKLSGNIPLFRS, PSISVVLLRENNLTGKIPVELCGL, SNVRMLDFAHNRLNESIPSCVTNL, LNQMFGLDLSSNELSGNIPEELGDL, KRVRSLNLSRNSLSGSIPGSFSN, RSIESLDLSFNKLHGTIPSQLTLLQ, and LVVFNVSYNNLSGVIPQGKQFNT. Residue asparagine 328 is glycosylated (N-linked (GlcNAc...) asparagine). 2 N-linked (GlcNAc...) asparagine glycosylation sites follow: asparagine 381 and asparagine 392. N-linked (GlcNAc...) asparagine glycans are attached at residues asparagine 436 and asparagine 465. Asparagine 608 carries an N-linked (GlcNAc...) asparagine glycan. Residues asparagine 653, asparagine 679, and asparagine 688 are each glycosylated (N-linked (GlcNAc...) asparagine). A glycan (N-linked (GlcNAc...) asparagine) is linked at asparagine 789. Residues asparagine 837 and asparagine 842 are each glycosylated (N-linked (GlcNAc...) asparagine). The helical transmembrane segment at 898–918 threads the bilayer; sequence IVVLWWSLGTTYVTVMMGFLV. The Cytoplasmic segment spans residues 919–948; sequence FLCFDSPWRRAWFCLVDTFIDRVKDVLGVI.

Belongs to the RLP family.

The protein localises to the cell membrane. This chain is Receptor-like protein 45, found in Arabidopsis thaliana (Mouse-ear cress).